A 102-amino-acid chain; its full sequence is ACAATCGSVCYTSSAISAAQEAGYDLYSANDDVSNYPHEYRNYEGFDFPVSGTYYEFPILRSGAVYSGNSPGADRVVFNGNDQLAGVITHTGASGNNFVACD.

Intrachain disulfides connect Cys2/Cys10 and Cys6/Cys101. The active site involves His38. Glu56 functions as the Proton acceptor in the catalytic mechanism. The active-site Proton donor is His90.

It belongs to the ribonuclease N1/T1 family.

It carries out the reaction [RNA] containing guanosine + H2O = an [RNA fragment]-3'-guanosine-3'-phosphate + a 5'-hydroxy-ribonucleotide-3'-[RNA fragment].. This Penicillium chrysogenum (Penicillium notatum) protein is Guanyl-specific ribonuclease Pc.